The chain runs to 123 residues: Large ribosomal subunit protein bL12 (123 aa).

It belongs to the bacterial ribosomal protein bL12 family. In terms of assembly, homodimer. Part of the ribosomal stalk of the 50S ribosomal subunit. Forms a multimeric L10(L12)X complex, where L10 forms an elongated spine to which 2 to 4 L12 dimers bind in a sequential fashion. Binds GTP-bound translation factors.

Functionally, forms part of the ribosomal stalk which helps the ribosome interact with GTP-bound translation factors. Is thus essential for accurate translation. This is Large ribosomal subunit protein bL12 from Chromobacterium violaceum (strain ATCC 12472 / DSM 30191 / JCM 1249 / CCUG 213 / NBRC 12614 / NCIMB 9131 / NCTC 9757 / MK).